The following is a 401-amino-acid chain: L-rhamnonate dehydratase (401 aa).

Positions 29 and 55 each coordinate substrate. Residues Asp-222, Glu-248, and Glu-276 each contribute to the Mg(2+) site. The Proton acceptor role is filled by His-325. Glu-345 serves as a coordination point for substrate.

It belongs to the mandelate racemase/muconate lactonizing enzyme family. RhamD subfamily. In terms of assembly, homooctamer; tetramer of dimers. Mg(2+) is required as a cofactor.

It carries out the reaction L-rhamnonate = 2-dehydro-3-deoxy-L-rhamnonate + H2O. Functionally, catalyzes the dehydration of L-rhamnonate to 2-keto-3-deoxy-L-rhamnonate (KDR). This is L-rhamnonate dehydratase from Klebsiella pneumoniae (strain 342).